Reading from the N-terminus, the 277-residue chain is Phosphonoacetaldehyde hydrolase (277 aa).

The Nucleophile role is filled by Asp-20. Positions 20 and 22 each coordinate Mg(2+). Lys-61 (schiff-base intermediate with substrate) is an active-site residue. Residue Asp-194 participates in Mg(2+) binding.

It belongs to the HAD-like hydrolase superfamily. PhnX family. In terms of assembly, homodimer. Requires Mg(2+) as cofactor.

It carries out the reaction phosphonoacetaldehyde + H2O = acetaldehyde + phosphate + H(+). Involved in phosphonate degradation. This Syntrophobacter fumaroxidans (strain DSM 10017 / MPOB) protein is Phosphonoacetaldehyde hydrolase.